Reading from the N-terminus, the 520-residue chain is 2-isopropylmalate synthase (520 aa).

The region spanning 5–267 (VIIFDTTLRD…HTNINHQEIY (263 aa)) is the Pyruvate carboxyltransferase domain. Asp14, His202, His204, and Asn238 together coordinate Mn(2+). A regulatory domain region spans residues 392–520 (RLDYFSVQSG…RLQQNNQEMV (129 aa)).

The protein belongs to the alpha-IPM synthase/homocitrate synthase family. LeuA type 1 subfamily. In terms of assembly, homodimer. Mn(2+) is required as a cofactor.

Its subcellular location is the cytoplasm. The enzyme catalyses 3-methyl-2-oxobutanoate + acetyl-CoA + H2O = (2S)-2-isopropylmalate + CoA + H(+). It participates in amino-acid biosynthesis; L-leucine biosynthesis; L-leucine from 3-methyl-2-oxobutanoate: step 1/4. In terms of biological role, catalyzes the condensation of the acetyl group of acetyl-CoA with 3-methyl-2-oxobutanoate (2-ketoisovalerate) to form 3-carboxy-3-hydroxy-4-methylpentanoate (2-isopropylmalate). The chain is 2-isopropylmalate synthase from Yersinia enterocolitica serotype O:8 / biotype 1B (strain NCTC 13174 / 8081).